We begin with the raw amino-acid sequence, 412 residues long: AT-rich interactive domain-containing protein 3C (412 aa).

Residues 1 to 23 (MEALQKQQAARLAQGVGPLAPAC) are compositionally biased toward low complexity. Residues 1–96 (MEALQKQQAA…SSQPPGLHPH (96 aa)) are disordered. Residues 50–73 (AEEEEDAEEDEEKREEAGAEEEAA) show a composition bias toward acidic residues. The span at 78 to 87 (PGAQGPSSPS) shows a compositional bias: low complexity. An ARID domain is found at 113-205 (DPKRKEFLDD…YLYPYECETR (93 aa)). Disordered stretches follow at residues 232 to 278 (TPLF…AHAC) and 388 to 412 (PVPA…SILP). A compositionally biased stretch (polar residues) spans 259–272 (TQSSPGPAQGSTSG). The region spanning 304–389 (LALGPTREKL…GVLFARRQPV (86 aa)) is the REKLES domain.

As to quaternary structure, interacts (via REKLES DOMAIN) with NPM1; the interaction mediates ARID3C nuclear shuttling.

The protein localises to the nucleus. In terms of biological role, transcription factor involved in monocyte-to-macrophage differentiation. Forms a complex with NPM1 to translocate to the nucleus, acting as a transcription factor that promotes the expression of the genes involved in macrophage differentiation, such as STAT3, STAT1 and JUNB. The sequence is that of AT-rich interactive domain-containing protein 3C from Homo sapiens (Human).